Here is a 284-residue protein sequence, read N- to C-terminus: Nucleotide-binding protein SO_3964 (284 aa).

Residue 8–15 (GRSGSGKS) participates in ATP binding. 56–59 (DVRN) contributes to the GTP binding site.

Belongs to the RapZ-like family.

Functionally, displays ATPase and GTPase activities. In Shewanella oneidensis (strain ATCC 700550 / JCM 31522 / CIP 106686 / LMG 19005 / NCIMB 14063 / MR-1), this protein is Nucleotide-binding protein SO_3964.